A 73-amino-acid polypeptide reads, in one-letter code: UPF0346 protein SH1485 (73 aa).

It belongs to the UPF0346 family.

The protein is UPF0346 protein SH1485 of Staphylococcus haemolyticus (strain JCSC1435).